A 277-amino-acid chain; its full sequence is Nickel transport system permease protein NikC (277 aa).

The Cytoplasmic portion of the chain corresponds to 1-12 (MNFFLSSRWSVR). Residues 13–33 (LALIIIALLALIALTSQWWLP) form a helical membrane-spanning segment. Residues 34 to 78 (YDPQAIDLPSRLLSPDAQHWLGTDHLGRDIFSRLMAATRVSLGSV) lie on the Periplasmic side of the membrane. The 194-residue stretch at 67–260 (LMAATRVSLG…ISVMAFNLVG (194 aa)) folds into the ABC transmembrane type-1 domain. Residues 79-99 (MACLLLVLTLGLVIGGSAGLI) form a helical membrane-spanning segment. Over 100–120 (GGRVDQATMRVADMFMTFPTS) the chain is Cytoplasmic. A helical membrane pass occupies residues 121–141 (ILSFFMVGVLGTGLTNVIIAI). Over 142 to 183 (ALSHWAWYARMVRSLVISLRQREFVLASRLSGAGHVRVFVDH) the chain is Periplasmic. Residues 184-204 (LAGAVIPSLLVLATLDIGHMM) form a helical membrane-spanning segment. Residues 205 to 207 (LHV) are Cytoplasmic-facing. The chain crosses the membrane as a helical span at residues 208-228 (AGMSFLGLGVTAPTAEWGVMI). Over 229 to 239 (NDARQYIWTQP) the chain is Periplasmic. Residues 240 to 260 (LQMFWPGLALFISVMAFNLVG) traverse the membrane as a helical segment. Topologically, residues 261 to 277 (DALRDHLDPHLVTEHAH) are cytoplasmic.

This sequence belongs to the binding-protein-dependent transport system permease family. OppBC subfamily. Probably forms a heterodimeric pore with NikB.

It localises to the cell inner membrane. Its function is as follows. Involved in a nickel transport system, probably translocates nickel through the bacterial inner membrane. In Escherichia coli O157:H7, this protein is Nickel transport system permease protein NikC (nikC).